The primary structure comprises 223 residues: Probable cytokinin riboside 5'-monophosphate phosphoribohydrolase LOGL1 (223 aa).

Substrate is bound by residues E89, 107–108 (RK), 124–130 (GYGTMEE), and T136. Residues 201–223 (QEVAPRTSWEMSELGYGKTPEES) form a disordered region.

This sequence belongs to the LOG family. In terms of tissue distribution, expressed in shoot apex, immature inflorescences and flowers.

The enzyme catalyses N(6)-(dimethylallyl)adenosine 5'-phosphate + H2O = N(6)-dimethylallyladenine + D-ribose 5-phosphate. It catalyses the reaction 9-ribosyl-trans-zeatin 5'-phosphate + H2O = trans-zeatin + D-ribose 5-phosphate. Its function is as follows. Cytokinin-activating enzyme working in the direct activation pathway. Phosphoribohydrolase that converts inactive cytokinin nucleotides to the biologically active free-base forms. The sequence is that of Probable cytokinin riboside 5'-monophosphate phosphoribohydrolase LOGL1 (LOGL1) from Oryza sativa subsp. japonica (Rice).